A 122-amino-acid polypeptide reads, in one-letter code: Interferon alpha-inducible protein 27, mitochondrial (122 aa).

The transit peptide at Met-1 to Ile-33 directs the protein to the mitochondrion. The helical transmembrane segment at Ala-34 to Thr-57 threads the bilayer. Lys-69 is covalently cross-linked (Glycyl lysine isopeptide (Lys-Gly) (interchain with G-Cter in ubiquitin)). Helical transmembrane passes span Met-71–Leu-91 and Leu-99–Ala-119. Positions Ile-76–Tyr-122 are mediates interaction with SKP2 and hepatitis C virus non-structural protein NS5A. Residues Thr-103–Ser-112 are required for hepatitis C virus non-structural protein NS5A degradation.

This sequence belongs to the IFI6/IFI27 family. As to quaternary structure, homodimer. Interacts with hepatitis C virus/HCV non-structural protein NS5A; promotes the ubiquitin-mediated proteasomal degradation of NS5A. Interacts with SKP2; promotes the ubiquitin-mediated proteasomal degradation of NS5A. Interacts with NR4A1. May interact with BCL2. Ubiquitinated by TRIM21 via 'Lys-6'-linked ubiquitin chains leading to IFI27 mitochondrial migration.

It localises to the mitochondrion membrane. It is found in the nucleus inner membrane. The protein resides in the endoplasmic reticulum membrane. In terms of biological role, probable adapter protein involved in different biological processes. Part of the signaling pathways that lead to apoptosis. Involved in type-I interferon-induced apoptosis characterized by a rapid and robust release of cytochrome C from the mitochondria and activation of BAX and caspases 2, 3, 6, 8 and 9. Also functions in TNFSF10-induced apoptosis. May also have a function in the nucleus, where it may be involved in the interferon-induced negative regulation of the transcriptional activity of NR4A1, NR4A2 and NR4A3 through the enhancement of XPO1-mediated nuclear export of these nuclear receptors. May thereby play a role in the vascular response to injury. In the innate immune response, has an antiviral activity towards hepatitis C virus/HCV. May prevent the replication of the virus by recruiting both the hepatitis C virus non-structural protein 5A/NS5A and the ubiquitination machinery via SKP2, promoting the ubiquitin-mediated proteasomal degradation of NS5A. Also promotes virus-induced pyroptosis by activating CASP3 in the mitochondria after 'Lys-6'-linked ubiquitination by TRIM21. This chain is Interferon alpha-inducible protein 27, mitochondrial, found in Homo sapiens (Human).